A 154-amino-acid chain; its full sequence is Endoribonuclease YbeY (154 aa).

Histidine 116, histidine 120, and histidine 126 together coordinate Zn(2+).

The protein belongs to the endoribonuclease YbeY family. Zn(2+) is required as a cofactor.

It localises to the cytoplasm. Its function is as follows. Single strand-specific metallo-endoribonuclease involved in late-stage 70S ribosome quality control and in maturation of the 3' terminus of the 16S rRNA. In Buchnera aphidicola subsp. Baizongia pistaciae (strain Bp), this protein is Endoribonuclease YbeY.